A 317-amino-acid chain; its full sequence is Transaldolase (317 aa).

Lys126 serves as the catalytic Schiff-base intermediate with substrate.

Belongs to the transaldolase family. Type 1 subfamily. As to quaternary structure, homodimer.

Its subcellular location is the cytoplasm. The enzyme catalyses D-sedoheptulose 7-phosphate + D-glyceraldehyde 3-phosphate = D-erythrose 4-phosphate + beta-D-fructose 6-phosphate. The protein operates within carbohydrate degradation; pentose phosphate pathway; D-glyceraldehyde 3-phosphate and beta-D-fructose 6-phosphate from D-ribose 5-phosphate and D-xylulose 5-phosphate (non-oxidative stage): step 2/3. Transaldolase is important for the balance of metabolites in the pentose-phosphate pathway. The chain is Transaldolase from Burkholderia pseudomallei (strain K96243).